A 185-amino-acid chain; its full sequence is UPF0149 protein PD_0802 (185 aa).

The protein belongs to the UPF0149 family.

The protein is UPF0149 protein PD_0802 of Xylella fastidiosa (strain Temecula1 / ATCC 700964).